The chain runs to 181 residues: Large ribosomal subunit protein uL6 (181 aa).

This sequence belongs to the universal ribosomal protein uL6 family. As to quaternary structure, part of the 50S ribosomal subunit.

This protein binds to the 23S rRNA, and is important in its secondary structure. It is located near the subunit interface in the base of the L7/L12 stalk, and near the tRNA binding site of the peptidyltransferase center. The protein is Large ribosomal subunit protein uL6 of Synechococcus sp. (strain JA-2-3B'a(2-13)) (Cyanobacteria bacterium Yellowstone B-Prime).